We begin with the raw amino-acid sequence, 118 residues long: Holo-[acyl-carrier-protein] synthase (118 aa).

Mg(2+) is bound by residues Asp-8 and Glu-58.

This sequence belongs to the P-Pant transferase superfamily. AcpS family. It depends on Mg(2+) as a cofactor.

It is found in the cytoplasm. It carries out the reaction apo-[ACP] + CoA = holo-[ACP] + adenosine 3',5'-bisphosphate + H(+). Transfers the 4'-phosphopantetheine moiety from coenzyme A to a Ser of acyl-carrier-protein. The polypeptide is Holo-[acyl-carrier-protein] synthase (Streptococcus equi subsp. zooepidemicus (strain H70)).